Consider the following 138-residue polypeptide: Large ribosomal subunit protein mL54 (138 aa).

A mitochondrion-targeting transit peptide spans 1–14; it reads MATKRLFGATRTWA.

It belongs to the mitochondrion-specific ribosomal protein mL54 family. As to quaternary structure, component of the mitochondrial large ribosomal subunit (mt-LSU). Mature mammalian 55S mitochondrial ribosomes consist of a small (28S) and a large (39S) subunit. The 28S small subunit contains a 12S ribosomal RNA (12S mt-rRNA) and 30 different proteins. The 39S large subunit contains a 16S rRNA (16S mt-rRNA), a copy of mitochondrial valine transfer RNA (mt-tRNA(Val)), which plays an integral structural role, and 52 different proteins.

The protein localises to the mitochondrion. The protein is Large ribosomal subunit protein mL54 (MRPL54) of Homo sapiens (Human).